A 199-amino-acid polypeptide reads, in one-letter code: 3-isopropylmalate dehydratase small subunit (199 aa).

This sequence belongs to the LeuD family. LeuD type 1 subfamily. In terms of assembly, heterodimer of LeuC and LeuD.

It catalyses the reaction (2R,3S)-3-isopropylmalate = (2S)-2-isopropylmalate. It functions in the pathway amino-acid biosynthesis; L-leucine biosynthesis; L-leucine from 3-methyl-2-oxobutanoate: step 2/4. Catalyzes the isomerization between 2-isopropylmalate and 3-isopropylmalate, via the formation of 2-isopropylmaleate. The sequence is that of 3-isopropylmalate dehydratase small subunit from Pseudoalteromonas translucida (strain TAC 125).